Consider the following 167-residue polypeptide: Lipoprotein signal peptidase (167 aa).

Helical transmembrane passes span 8 to 28 (FFLL…YWIM), 61 to 81 (FSHW…LWLW), and 93 to 113 (FGLT…ICFY). Residues aspartate 117 and aspartate 136 contribute to the active site. A helical transmembrane segment spans residues 126–146 (IFYFAVFNLADTFITLGVIAI).

It belongs to the peptidase A8 family.

The protein resides in the cell inner membrane. The catalysed reaction is Release of signal peptides from bacterial membrane prolipoproteins. Hydrolyzes -Xaa-Yaa-Zaa-|-(S,diacylglyceryl)Cys-, in which Xaa is hydrophobic (preferably Leu), and Yaa (Ala or Ser) and Zaa (Gly or Ala) have small, neutral side chains.. It functions in the pathway protein modification; lipoprotein biosynthesis (signal peptide cleavage). Its function is as follows. This protein specifically catalyzes the removal of signal peptides from prolipoproteins. In Bartonella quintana (strain Toulouse) (Rochalimaea quintana), this protein is Lipoprotein signal peptidase.